Reading from the N-terminus, the 106-residue chain is BLOC-1-related complex subunit 7 (106 aa).

It belongs to the BORCS7 family. As to quaternary structure, component of the BLOC-one-related complex (BORC) which is composed of BLOC1S1, BLOC1S2, BORCS5, BORCS6, BORCS7, BORCS8, KXD1 and SNAPIN.

The protein resides in the lysosome membrane. As part of the BORC complex may play a role in lysosomes movement and localization at the cell periphery. Associated with the cytosolic face of lysosomes, the BORC complex may recruit ARL8B and couple lysosomes to microtubule plus-end-directed kinesin motor. This is BLOC-1-related complex subunit 7 from Pongo abelii (Sumatran orangutan).